We begin with the raw amino-acid sequence, 23 residues long: M-myrmeciitoxin-Mp2b (23 aa).

Q23 bears the Glutamine amide mark.

The protein belongs to the formicidae venom precursor-01 superfamily. Ant pilosulin family. In terms of assembly, heterodimer with M-MIITX-Mp2a (pilosulin-3a) (AC Q26464); disulfide-linked. Only heterodimers (and not monomers) have been identified in the venom. As to expression, expressed by the venom gland.

It is found in the secreted. In terms of biological role, heterodimer protein that may serve both defensive (pain-inducing) and predatory (insecticidal) roles. Has membrane-disrupting activity and shows induction of non-specific calcium influx into cells,. Shows broad-spectrum activity against a diverse range of bacteria, and cell lines, as well as hemolytic activity (EC(50)=2.18 uM). In vivo, shows moderate insecticidal activity against D.melanogaster and potent anthelmintic activity against the veterinary nematode H.contortus. In addition, intraplantar injection into mice induces nocifensive behavior and mechanical allodynia. This Myrmecia pilosula (Jack jumper ant) protein is M-myrmeciitoxin-Mp2b.